The primary structure comprises 319 residues: Serine/threonine-protein phosphatase PP1 isozyme 2 (319 aa).

Mn(2+) contacts are provided by Asp-61, His-63, Asp-89, and Asn-121. His-122 serves as the catalytic Proton donor. Positions 170 and 245 each coordinate Mn(2+).

This sequence belongs to the PPP phosphatase family. PP-1 subfamily. Requires Mn(2+) as cofactor.

The catalysed reaction is O-phospho-L-seryl-[protein] + H2O = L-seryl-[protein] + phosphate. The enzyme catalyses O-phospho-L-threonyl-[protein] + H2O = L-threonyl-[protein] + phosphate. The chain is Serine/threonine-protein phosphatase PP1 isozyme 2 from Acetabularia peniculus (Green alga).